We begin with the raw amino-acid sequence, 338 residues long: Glycerol-3-phosphate dehydrogenase [NAD(P)+] (338 aa).

Residues serine 13, tryptophan 14, and lysine 108 each contribute to the NADPH site. Residues lysine 108, glycine 139, and serine 141 each contribute to the sn-glycerol 3-phosphate site. Alanine 143 is an NADPH binding site. Residues lysine 194, aspartate 247, serine 257, arginine 258, and asparagine 259 each coordinate sn-glycerol 3-phosphate. Residue lysine 194 is the Proton acceptor of the active site. Residue arginine 258 participates in NADPH binding. Residues valine 282 and glutamate 284 each contribute to the NADPH site.

It belongs to the NAD-dependent glycerol-3-phosphate dehydrogenase family.

The protein localises to the cytoplasm. The enzyme catalyses sn-glycerol 3-phosphate + NAD(+) = dihydroxyacetone phosphate + NADH + H(+). The catalysed reaction is sn-glycerol 3-phosphate + NADP(+) = dihydroxyacetone phosphate + NADPH + H(+). It participates in membrane lipid metabolism; glycerophospholipid metabolism. Catalyzes the reduction of the glycolytic intermediate dihydroxyacetone phosphate (DHAP) to sn-glycerol 3-phosphate (G3P), the key precursor for phospholipid synthesis. The protein is Glycerol-3-phosphate dehydrogenase [NAD(P)+] of Streptococcus pyogenes serotype M28 (strain MGAS6180).